The sequence spans 1905 residues: Low-density lipoprotein receptor-related protein 4 (1905 aa).

A signal peptide spans 1-20 (MRRWWGALLLGALLCAHGIA). Over 21–1725 (SSLECACGRS…AAPGEGLHVS (1705 aa)) the chain is Extracellular. 8 LDL-receptor class A domains span residues 26 to 67 (ACGR…DGCT), 70 to 106 (TCSP…QDCP), 109 to 144 (ECEE…EQCD), 147 to 183 (KCSD…ESCP), 190 to 226 (PCNL…SDCS), 230 to 266 (PCRS…RNCT), 269 to 305 (MCTA…ENCE), and 311 to 350 (QCAS…QNCR). 30 cysteine pairs are disulfide-bonded: Cys-27-Cys-44, Cys-34-Cys-57, Cys-51-Cys-66, Cys-71-Cys-83, Cys-78-Cys-96, Cys-90-Cys-105, Cys-110-Cys-122, Cys-117-Cys-135, Cys-129-Cys-143, Cys-148-Cys-160, Cys-155-Cys-173, Cys-167-Cys-182, Cys-191-Cys-203, Cys-198-Cys-216, Cys-210-Cys-225, Cys-231-Cys-243, Cys-238-Cys-256, Cys-250-Cys-265, Cys-270-Cys-282, Cys-277-Cys-295, Cys-289-Cys-304, Cys-312-Cys-324, Cys-319-Cys-337, Cys-331-Cys-349, Cys-358-Cys-369, Cys-365-Cys-378, Cys-380-Cys-393, Cys-399-Cys-409, Cys-405-Cys-418, and Cys-420-Cys-433. An N-linked (GlcNAc...) asparagine glycan is attached at Asn-264. The EGF-like 1; atypical domain maps to 354-394 (GEENCNVNNGGCAQKCQMVRGAVQCTCHTGYRLTEDGRTCQ). The region spanning 395–434 (DVNECAEEGYCSQGCTNTEGAFQCWCEAGYELRPDRRSCK) is the EGF-like 2; calcium-binding domain. LDL-receptor class B repeat units lie at residues 480 to 522 (ELVF…DWVH), 523 to 565 (DKLY…HPME), 566 to 609 (GTIY…DYAG), 610 to 652 (RRMY…FEDS), and 653 to 693 (LYWT…LHPQ). N-linked (GlcNAc...) asparagine glycosylation is present at Asn-498. The EGF-like 3 domain occupies 698–737 (GKNRCGDNNGGCTHLCLPSGQNYTCACPTGFRKINSHACA). 3 disulfides stabilise this stretch: Cys-702-Cys-713, Cys-709-Cys-722, and Cys-724-Cys-736. N-linked (GlcNAc...) asparagine glycosylation occurs at Asn-719. LDL-receptor class B repeat units lie at residues 785–827 (DHVY…DWVT), 828–870 (NKLY…EPMG), 871–914 (GYMY…DYGS), 915–956 (QRLY…LYGQ), and 957–998 (RIYW…FHRQ). N-linked (GlcNAc...) asparagine glycosylation occurs at Asn-901. An N-linked (GlcNAc...) asparagine glycan is attached at Asn-1077. LDL-receptor class B repeat units lie at residues 1093-1135 (GKVY…DAIG), 1136-1178 (RKVY…YHEM), 1179-1222 (GFMY…DKTS), 1223-1263 (SQLL…LLDS), 1264-1306 (YIYW…DRAQ), 1397-1439 (GKVY…DWVA), 1440-1482 (RNLY…FPRK), 1483-1526 (GYLF…DYDT), 1527-1568 (RRIY…QDRW), and 1569-1610 (IYWT…SPQR). Asn-1415 and Asn-1467 each carry an N-linked (GlcNAc...) asparagine glycan. The interval 1661-1696 (ATSMNEKSPVLPNTLPTTLHSSTTKTRTSLEGAGGR) is disordered. Low complexity predominate over residues 1674–1690 (TLPTTLHSSTTKTRTSL). The helical transmembrane segment at 1726 to 1746 (YAIGGLLSILLILLVIAALML) threads the bilayer. Topologically, residues 1747–1905 (YRHRKSKFTD…ERKLSSESQV (159 aa)) are cytoplasmic. The interval 1852-1905 (ASSGSLDDTETEQLLQEEQSECSSVHTAATPERRGSLPDTGWKHERKLSSESQV) is disordered. The span at 1882–1905 (PERRGSLPDTGWKHERKLSSESQV) shows a compositional bias: basic and acidic residues.

It belongs to the LDLR family. Homooligomer. Interacts with MUSK; the heterodimer forms an AGRIN receptor complex that binds AGRIN resulting in activation of MUSK. Interacts (via the extracellular domain) with SOST; the interaction facilitates the inhibition of Wnt signaling. Interacts with MESD; the interaction promotes glycosylation of LRP4 and its cell-surface expression. In terms of processing, N-glycosylation is required for cell surface location.

It is found in the cell membrane. Its function is as follows. Mediates SOST-dependent inhibition of bone formation. Functions as a specific facilitator of SOST-mediated inhibition of Wnt signaling. Plays a key role in the formation and the maintenance of the neuromuscular junction (NMJ), the synapse between motor neuron and skeletal muscle. Directly binds AGRIN and recruits it to the MUSK signaling complex. Mediates the AGRIN-induced phosphorylation of MUSK, the kinase of the complex. The activation of MUSK in myotubes induces the formation of NMJ by regulating different processes including the transcription of specific genes and the clustering of AChR in the postsynaptic membrane. Alternatively, may be involved in the negative regulation of the canonical Wnt signaling pathway, being able to antagonize the LRP6-mediated activation of this pathway. More generally, has been proposed to function as a cell surface endocytic receptor binding and internalizing extracellular ligands for degradation by lysosomes. Plays an essential role in the process of digit differentiation. The chain is Low-density lipoprotein receptor-related protein 4 (Lrp4) from Mus musculus (Mouse).